The primary structure comprises 513 residues: Probable lipid II flippase MurJ (513 aa).

The next 15 membrane-spanning stretches (helical) occupy residues 3-23, 25-45, 83-103, 133-153, 162-182, 186-206, 221-241, 245-265, 271-291, 313-333, 354-374, 382-402, 405-425, 441-461, and 481-501; these read ILKS…LGFM, DLLI…FLAF, FISN…AFGI, IMFP…ILNA, YSSI…TAYF, ILSL…YQFP, ILNL…LGMS, VSII…ISWI, LVEF…LPLL, LVCI…ESLI, IEFY…LAGF, TPMK…IFFI, FQYT…FFLL, WLRF…LLFI, and LFYI…CLGL.

Belongs to the MurJ/MviN family.

The protein localises to the cell inner membrane. The protein operates within cell wall biogenesis; peptidoglycan biosynthesis. Functionally, involved in peptidoglycan biosynthesis. Transports lipid-linked peptidoglycan precursors from the inner to the outer leaflet of the cytoplasmic membrane. This Buchnera aphidicola subsp. Baizongia pistaciae (strain Bp) protein is Probable lipid II flippase MurJ.